Consider the following 416-residue polypeptide: UBX domain-containing protein 4 (416 aa).

A UBX domain is found at 273–350 (KAISECLLRV…EFGSKTMLLF (78 aa)). Residues 376-402 (TRTTPSVNTINKSNPQGPSDNATSIKK) are disordered. Residues 378 to 402 (TTPSVNTINKSNPQGPSDNATSIKK) are compositionally biased toward polar residues.

It localises to the nucleus. The protein localises to the cytoplasm. Involved in CDC48-dependent protein degradation through the ubiquitin/proteasome pathway. The chain is UBX domain-containing protein 4 (UBX4) from Saccharomyces cerevisiae (strain ATCC 204508 / S288c) (Baker's yeast).